The chain runs to 326 residues: Tryptophan--tRNA ligase (326 aa).

Residues 11 to 13 (QPT) and 19 to 20 (GN) contribute to the ATP site. The short motif at 12 to 20 (PTGQIHLGN) is the 'HIGH' region element. Position 135 (aspartate 135) interacts with L-tryptophan. ATP-binding positions include 147–149 (GED), valine 186, and 195–199 (KMSKS). Residues 195–199 (KMSKS) carry the 'KMSKS' region motif.

This sequence belongs to the class-I aminoacyl-tRNA synthetase family. As to quaternary structure, homodimer.

The protein localises to the cytoplasm. The catalysed reaction is tRNA(Trp) + L-tryptophan + ATP = L-tryptophyl-tRNA(Trp) + AMP + diphosphate + H(+). Catalyzes the attachment of tryptophan to tRNA(Trp). In Helicobacter pylori (strain ATCC 700392 / 26695) (Campylobacter pylori), this protein is Tryptophan--tRNA ligase.